We begin with the raw amino-acid sequence, 116 residues long: Putative pterin-4-alpha-carbinolamine dehydratase (116 aa).

It belongs to the pterin-4-alpha-carbinolamine dehydratase family.

The enzyme catalyses (4aS,6R)-4a-hydroxy-L-erythro-5,6,7,8-tetrahydrobiopterin = (6R)-L-erythro-6,7-dihydrobiopterin + H2O. In Stenotrophomonas maltophilia (strain K279a), this protein is Putative pterin-4-alpha-carbinolamine dehydratase.